Here is an 890-residue protein sequence, read N- to C-terminus: Wolframin (890 aa).

Met1 is modified (N-acetylmethionine). Pro residues predominate over residues 1 to 20; it reads MNSGTPPPSPSGPPPPPAPQ. A disordered region spans residues 1-83; the sequence is MNSGTPPPSP…ETDRAGPMKA (83 aa). Positions 1–323 are interaction with ATP6V1A; it reads MNSGTPPPSP…MHWLSTIVPT (323 aa). A Phosphothreonine modification is found at Thr30. Ser32 is modified (phosphoserine). Residues 50 to 67 show a composition bias toward low complexity; that stretch reads PSAGRSAGEAAAPEPRAP. The span at 71–83 shows a compositional bias: basic and acidic residues; sequence SREETDRAGPMKA. Ser158 is subject to Phosphoserine. Residues 208-227 form a disordered region; it reads VNEQDGGAQPGPVPKSLQKQ. 10 helical membrane-spanning segments follow: residues 314-334, 340-360, 402-422, 427-447, 465-485, 496-516, 529-549, 563-583, 589-609, and 632-652; these read MHWLSTIVPTHHINALIFFFI, IDFFAFFIPLVVFYLSFVSMV, NHLEPYIHFLLSVVFVIFSFP, DCIPCSELAVISTFFTVTSYM, VAAGLLSLLPTVPVDWRFLKV, GHFIILNVSLPCLLYVYLFYL, TYCYLVPYLVCFMWCELSVVI, IGYFLFLFALPILVAGLALMG, RWFLSLDLTKIMVTTVICGVP, and SSMVKLILVWLTAILLFCWFY. Over 653 to 869 the chain is Lumenal; that stretch reads VYRSEGMKVY…HVKIEQDWRS (217 aa). N-linked (GlcNAc...) asparagine glycans are attached at residues Asn663 and Asn748. Residues 870–890 form a helical membrane-spanning segment; sequence TVHGALKFAFDFFFFPFLSAA.

As to quaternary structure, interacts with ATP6V1A. In terms of tissue distribution, highly expressed in the developing lens.

The protein localises to the endoplasmic reticulum membrane. It localises to the cytoplasmic vesicle. The protein resides in the secretory vesicle. Functionally, participates in the regulation of cellular Ca(2+) homeostasis, at least partly, by modulating the filling state of the endoplasmic reticulum Ca(2+) store. Negatively regulates the ER stress response and positively regulates the stability of V-ATPase subunits ATP6V1A and ATP1B1 by preventing their degradation through an unknown proteasome-independent mechanism. This is Wolframin (Wfs1) from Mus musculus (Mouse).